Consider the following 265-residue polypeptide: 5'-nucleotidase SurE (265 aa).

Residues Asp8, Asp9, Ser40, and Asn98 each coordinate a divalent metal cation.

This sequence belongs to the SurE nucleotidase family. The cofactor is a divalent metal cation.

It localises to the cytoplasm. It carries out the reaction a ribonucleoside 5'-phosphate + H2O = a ribonucleoside + phosphate. Its function is as follows. Nucleotidase that shows phosphatase activity on nucleoside 5'-monophosphates. This chain is 5'-nucleotidase SurE, found in Thermosynechococcus vestitus (strain NIES-2133 / IAM M-273 / BP-1).